The chain runs to 197 residues: Probable GTP-binding protein EngB (197 aa).

In terms of domain architecture, EngB-type G spans 22-195 (GYPEIALVGR…WNWIEAQAFG (174 aa)). Residues 30–37 (GRSNVGKS), 57–61 (GKTQT), 75–78 (DVPG), 142–145 (TKSD), and 174–176 (FSA) each bind GTP. Positions 37 and 59 each coordinate Mg(2+).

Belongs to the TRAFAC class TrmE-Era-EngA-EngB-Septin-like GTPase superfamily. EngB GTPase family. Mg(2+) serves as cofactor.

Its function is as follows. Necessary for normal cell division and for the maintenance of normal septation. This chain is Probable GTP-binding protein EngB, found in Levilactobacillus brevis (strain ATCC 367 / BCRC 12310 / CIP 105137 / JCM 1170 / LMG 11437 / NCIMB 947 / NCTC 947) (Lactobacillus brevis).